The primary structure comprises 254 residues: Pyridoxine 5'-phosphate synthase (254 aa).

Asn12 serves as a coordination point for 3-amino-2-oxopropyl phosphate. A 1-deoxy-D-xylulose 5-phosphate-binding site is contributed by 14-15 (DH). Arg23 is a 3-amino-2-oxopropyl phosphate binding site. Residue His48 is the Proton acceptor of the active site. Residues Arg50 and His55 each coordinate 1-deoxy-D-xylulose 5-phosphate. Glu75 functions as the Proton acceptor in the catalytic mechanism. Residue Thr105 coordinates 1-deoxy-D-xylulose 5-phosphate. The active-site Proton donor is the His199. Residues Gly200 and 221 to 222 (GF) contribute to the 3-amino-2-oxopropyl phosphate site.

Belongs to the PNP synthase family. Homooctamer; tetramer of dimers.

The protein localises to the cytoplasm. It catalyses the reaction 3-amino-2-oxopropyl phosphate + 1-deoxy-D-xylulose 5-phosphate = pyridoxine 5'-phosphate + phosphate + 2 H2O + H(+). It functions in the pathway cofactor biosynthesis; pyridoxine 5'-phosphate biosynthesis; pyridoxine 5'-phosphate from D-erythrose 4-phosphate: step 5/5. Functionally, catalyzes the complicated ring closure reaction between the two acyclic compounds 1-deoxy-D-xylulose-5-phosphate (DXP) and 3-amino-2-oxopropyl phosphate (1-amino-acetone-3-phosphate or AAP) to form pyridoxine 5'-phosphate (PNP) and inorganic phosphate. The sequence is that of Pyridoxine 5'-phosphate synthase from Rhodopseudomonas palustris (strain TIE-1).